A 155-amino-acid chain; its full sequence is Ribosome maturation factor RimP (155 aa).

This sequence belongs to the RimP family.

Its subcellular location is the cytoplasm. Required for maturation of 30S ribosomal subunits. The sequence is that of Ribosome maturation factor RimP from Gemmatimonas aurantiaca (strain DSM 14586 / JCM 11422 / NBRC 100505 / T-27).